Here is a 307-residue protein sequence, read N- to C-terminus: GTPase Era (307 aa).

The Era-type G domain maps to 13–180; the sequence is RCGFVALIGA…RRALAEMVPP (168 aa). Positions 21–28 are G1; sequence GAPNVGKS. 21–28 lines the GTP pocket; sequence GAPNVGKS. Residues 47–51 form a G2 region; it reads QTTRA. The interval 68 to 71 is G3; it reads DTPG. Residues 68–72 and 130–133 contribute to the GTP site; these read DTPGI and NKVD. A G4 region spans residues 130 to 133; sequence NKVD. The segment at 159-161 is G5; that stretch reads ISA. One can recognise a KH type-2 domain in the interval 211–288; the sequence is LHQELPYQST…HLFLFVKVRE (78 aa).

This sequence belongs to the TRAFAC class TrmE-Era-EngA-EngB-Septin-like GTPase superfamily. Era GTPase family. In terms of assembly, monomer.

The protein resides in the cytoplasm. The protein localises to the cell inner membrane. In terms of biological role, an essential GTPase that binds both GDP and GTP, with rapid nucleotide exchange. Plays a role in 16S rRNA processing and 30S ribosomal subunit biogenesis and possibly also in cell cycle regulation and energy metabolism. The chain is GTPase Era from Bradyrhizobium sp. (strain ORS 278).